Reading from the N-terminus, the 339-residue chain is Nucleoid-associated protein Asuc_0779 (339 aa).

The protein belongs to the YejK family.

It localises to the cytoplasm. It is found in the nucleoid. The polypeptide is Nucleoid-associated protein Asuc_0779 (Actinobacillus succinogenes (strain ATCC 55618 / DSM 22257 / CCUG 43843 / 130Z)).